An 82-amino-acid polypeptide reads, in one-letter code: Delta-conotoxin-like SmVIA (82 aa).

An N-terminal signal peptide occupies residues 1–22; the sequence is MKLTCVMIVAVLFLIAWTFVTA. Residues 23 to 49 constitute a propeptide that is removed on maturation; the sequence is DDSRNGLKNLFPKARHEMKNPEASKLN. Disulfide bonds link Cys-54-Cys-69, Cys-61-Cys-73, and Cys-68-Cys-77. Pro-65 is modified (4-hydroxyproline).

It belongs to the conotoxin O1 superfamily. Expressed by the venom duct.

Its subcellular location is the secreted. Delta-conotoxins bind to site 6 of voltage-gated sodium channels (Nav) and inhibit the inactivation process. The sequence is that of Delta-conotoxin-like SmVIA from Conus stercusmuscarum (Fly-specked cone).